A 235-amino-acid chain; its full sequence is Cobalt transport protein CbiM (235 aa).

The first 33 residues, 1–33 (MRYLKFFLLLVFLVPSFGFSMHIMEGFLPPTHA), serve as a signal peptide directing secretion. 6 helical membrane passes run 34–51 (LIWY…LFTI), 63–83 (MLLA…IPSV), 95–115 (LGAI…VLLF), 118–138 (LLLA…MAIV), 156–176 (NIAV…TTSF), and 199–219 (IFAI…VVVI).

It belongs to the CbiM family. As to quaternary structure, forms an energy-coupling factor (ECF) transporter complex composed of an ATP-binding protein (A component, CbiO), a transmembrane protein (T component, CbiQ) and 2 possible substrate-capture proteins (S components, CbiM and CbiN) of unknown stoichimetry.

The protein resides in the cell inner membrane. It functions in the pathway cofactor biosynthesis; adenosylcobalamin biosynthesis. Part of the energy-coupling factor (ECF) transporter complex CbiMNOQ involved in cobalt import. The protein is Cobalt transport protein CbiM of Thermosipho melanesiensis (strain DSM 12029 / CIP 104789 / BI429).